A 352-amino-acid chain; its full sequence is Outer membrane protein assembly factor BamC (352 aa).

The N-terminal stretch at 1–19 (MQYWIPKALAVSVLVSLSG) is a signal peptide. Residue Cys20 is the site of N-palmitoyl cysteine attachment. Cys20 is lipidated: S-diacylglycerol cysteine.

This sequence belongs to the BamC family. As to quaternary structure, part of the Bam complex.

The protein resides in the cell outer membrane. Its function is as follows. Part of the outer membrane protein assembly complex, which is involved in assembly and insertion of beta-barrel proteins into the outer membrane. The sequence is that of Outer membrane protein assembly factor BamC from Pseudoalteromonas sp. (strain SM9913).